The following is a 971-amino-acid chain: Protein ALWAYS EARLY 1 (971 aa).

A compositionally biased stretch (basic residues) spans 1–11 (MAPTRKSKSVN). Disordered regions lie at residues 1–40 (MAPT…LADK), 117–137 (SESE…LKRK), 197–260 (IEDF…MFEN), 326–371 (GLLE…GLED), and 421–507 (PKES…KISL). In terms of domain architecture, SANT spans 40-98 (KLGPQWTKRELVRFYDAYRKYVGDWKKVAAAVRNNRSVEMVETLFCMNRAYLSLPEGTA). Basic and acidic residues-rich tracts occupy residues 209–219 (KQLDADDDASR), 332–350 (SSPH…KKSN), and 424–440 (STQD…EVDS). A compositionally biased stretch (polar residues) spans 450–470 (SSQGPAKQLKTAKTTVESSSA).

Expressed ubiquitously in vegetative and reproductive tissues.

It localises to the nucleus. In Arabidopsis thaliana (Mouse-ear cress), this protein is Protein ALWAYS EARLY 1 (ALY1).